The primary structure comprises 606 residues: EPM2A-interacting protein 1 (606 aa).

Phosphoserine is present on S147.

In terms of assembly, interacts with EPM2A.

Its subcellular location is the endoplasmic reticulum. This is EPM2A-interacting protein 1 (Epm2aip1) from Mus musculus (Mouse).